Consider the following 217-residue polypeptide: tRNA (guanine-N(7)-)-methyltransferase (217 aa).

Residues glutamate 44, glutamate 69, aspartate 96, and aspartate 118 each contribute to the S-adenosyl-L-methionine site. Residue aspartate 118 is part of the active site. Substrate contacts are provided by residues lysine 122, aspartate 154, and 191 to 194 (TEYE).

It belongs to the class I-like SAM-binding methyltransferase superfamily. TrmB family.

It carries out the reaction guanosine(46) in tRNA + S-adenosyl-L-methionine = N(7)-methylguanosine(46) in tRNA + S-adenosyl-L-homocysteine. It participates in tRNA modification; N(7)-methylguanine-tRNA biosynthesis. In terms of biological role, catalyzes the formation of N(7)-methylguanine at position 46 (m7G46) in tRNA. In Bacillus cereus (strain G9842), this protein is tRNA (guanine-N(7)-)-methyltransferase.